The primary structure comprises 733 residues: Phosphoribosylformylglycinamidine synthase subunit PurL (733 aa).

H41 is an active-site residue. The ATP site is built by Y44 and K83. Mg(2+) is bound at residue E85. Substrate is bound by residues 86–89 (SHNH) and R108. H87 serves as the catalytic Proton acceptor. D109 is a Mg(2+) binding site. Positions 212–232 (GASFASQELSEESEEKRPSVQ) are disordered. Q232 is a binding site for substrate. D260 contributes to the Mg(2+) binding site. Residue 304-306 (ESQ) coordinates substrate. ATP is bound by residues D488 and G525. Residue N526 participates in Mg(2+) binding. S528 is a substrate binding site.

Belongs to the FGAMS family. As to quaternary structure, monomer. Part of the FGAM synthase complex composed of 1 PurL, 1 PurQ and 2 PurS subunits.

The protein localises to the cytoplasm. It carries out the reaction N(2)-formyl-N(1)-(5-phospho-beta-D-ribosyl)glycinamide + L-glutamine + ATP + H2O = 2-formamido-N(1)-(5-O-phospho-beta-D-ribosyl)acetamidine + L-glutamate + ADP + phosphate + H(+). It participates in purine metabolism; IMP biosynthesis via de novo pathway; 5-amino-1-(5-phospho-D-ribosyl)imidazole from N(2)-formyl-N(1)-(5-phospho-D-ribosyl)glycinamide: step 1/2. Part of the phosphoribosylformylglycinamidine synthase complex involved in the purines biosynthetic pathway. Catalyzes the ATP-dependent conversion of formylglycinamide ribonucleotide (FGAR) and glutamine to yield formylglycinamidine ribonucleotide (FGAM) and glutamate. The FGAM synthase complex is composed of three subunits. PurQ produces an ammonia molecule by converting glutamine to glutamate. PurL transfers the ammonia molecule to FGAR to form FGAM in an ATP-dependent manner. PurS interacts with PurQ and PurL and is thought to assist in the transfer of the ammonia molecule from PurQ to PurL. This chain is Phosphoribosylformylglycinamidine synthase subunit PurL, found in Caldanaerobacter subterraneus subsp. tengcongensis (strain DSM 15242 / JCM 11007 / NBRC 100824 / MB4) (Thermoanaerobacter tengcongensis).